We begin with the raw amino-acid sequence, 356 residues long: 3-isopropylmalate dehydrogenase (356 aa).

Substrate-binding residues include Arg95, Arg105, Arg133, and Asp223. The Mg(2+) site is built by Asp223, Asp247, and Asp251. 281–293 serves as a coordination point for NAD(+); sequence GSAPDIAGQNKAN.

The protein belongs to the isocitrate and isopropylmalate dehydrogenases family. LeuB type 1 subfamily. As to quaternary structure, homodimer. Mg(2+) is required as a cofactor. Mn(2+) serves as cofactor.

The protein resides in the cytoplasm. The catalysed reaction is (2R,3S)-3-isopropylmalate + NAD(+) = 4-methyl-2-oxopentanoate + CO2 + NADH. It functions in the pathway amino-acid biosynthesis; L-leucine biosynthesis; L-leucine from 3-methyl-2-oxobutanoate: step 3/4. Catalyzes the oxidation of 3-carboxy-2-hydroxy-4-methylpentanoate (3-isopropylmalate) to 3-carboxy-4-methyl-2-oxopentanoate. The product decarboxylates to 4-methyl-2 oxopentanoate. The chain is 3-isopropylmalate dehydrogenase from Neisseria meningitidis serogroup A / serotype 4A (strain DSM 15465 / Z2491).